Consider the following 20-residue polypeptide: Cytochrome P450 2A7 (20 aa).

It belongs to the cytochrome P450 family. The cofactor is heme.

The protein localises to the endoplasmic reticulum membrane. The protein resides in the microsome membrane. It catalyses the reaction an organic molecule + reduced [NADPH--hemoprotein reductase] + O2 = an alcohol + oxidized [NADPH--hemoprotein reductase] + H2O + H(+). In terms of biological role, exhibits a high coumarin 7-hydroxylase activity. This Papio sp. (Baboon) protein is Cytochrome P450 2A7 (CYP2A7).